A 445-amino-acid chain; its full sequence is Ribosomal protein uS12 methylthiotransferase RimO (445 aa).

Residues 4 to 119 (YKVGMVSLGC…INEAIMNFIN (116 aa)) form the MTTase N-terminal domain. [4Fe-4S] cluster-binding residues include cysteine 13, cysteine 48, cysteine 82, cysteine 157, cysteine 161, and cysteine 164. One can recognise a Radical SAM core domain in the interval 143 to 373 (TTDKATAYLR…MLLQKELSEE (231 aa)). The 66-residue stretch at 376–441 (KNKLGREYDV…EYDLVGVVCN (66 aa)) folds into the TRAM domain.

The protein belongs to the methylthiotransferase family. RimO subfamily. [4Fe-4S] cluster is required as a cofactor.

The protein resides in the cytoplasm. It catalyses the reaction L-aspartate(89)-[ribosomal protein uS12]-hydrogen + (sulfur carrier)-SH + AH2 + 2 S-adenosyl-L-methionine = 3-methylsulfanyl-L-aspartate(89)-[ribosomal protein uS12]-hydrogen + (sulfur carrier)-H + 5'-deoxyadenosine + L-methionine + A + S-adenosyl-L-homocysteine + 2 H(+). Its function is as follows. Catalyzes the methylthiolation of an aspartic acid residue of ribosomal protein uS12. This chain is Ribosomal protein uS12 methylthiotransferase RimO, found in Clostridium perfringens (strain SM101 / Type A).